A 575-amino-acid polypeptide reads, in one-letter code: Proline--tRNA ligase (575 aa).

The protein belongs to the class-II aminoacyl-tRNA synthetase family. ProS type 1 subfamily. As to quaternary structure, homodimer.

The protein resides in the cytoplasm. It catalyses the reaction tRNA(Pro) + L-proline + ATP = L-prolyl-tRNA(Pro) + AMP + diphosphate. Its function is as follows. Catalyzes the attachment of proline to tRNA(Pro) in a two-step reaction: proline is first activated by ATP to form Pro-AMP and then transferred to the acceptor end of tRNA(Pro). As ProRS can inadvertently accommodate and process non-cognate amino acids such as alanine and cysteine, to avoid such errors it has two additional distinct editing activities against alanine. One activity is designated as 'pretransfer' editing and involves the tRNA(Pro)-independent hydrolysis of activated Ala-AMP. The other activity is designated 'posttransfer' editing and involves deacylation of mischarged Ala-tRNA(Pro). The misacylated Cys-tRNA(Pro) is not edited by ProRS. This Heliobacterium modesticaldum (strain ATCC 51547 / Ice1) protein is Proline--tRNA ligase.